A 140-amino-acid polypeptide reads, in one-letter code: Mialostatin (140 aa).

The N-terminal stretch at 1-18 (MAFFKSAVFLVCVVLAAA) is a signal peptide. Cystine bridges form between Cys90-Cys103 and Cys114-Cys134.

Belongs to the cystatin family. In terms of tissue distribution, expressed in midgut (at protein level).

It localises to the secreted. Its function is as follows. Inhibitor of cysteine proteinases. Inhibits several endogenous midgut digestive cysteine proteases, such as cathepsin L1, L3, B and C, but not aspartic protease cathepsin D1 and cysteine protease legumain. Inhibits proteolysis of blood proteins catalyzed by tick gut cysteine cathepsins. Inhibits host cathepsin B (CSTB), C (CTSC), H (CTSH), K (CTSK), L (CTSL) and S (CTSS). This is Mialostatin from Ixodes ricinus (Common tick).